The sequence spans 355 residues: Protein-glutamate methylesterase/protein-glutamine glutaminase (355 aa).

The Response regulatory domain occupies 4–121 (KVLIIDDSAL…ANGMHEYSEM (118 aa)). D55 bears the 4-aspartylphosphate mark. The CheB-type methylesterase domain maps to 156-348 (LISSEKLIII…GRVLQYLAAN (193 aa)). Residues S168, H194, and D290 contribute to the active site.

It belongs to the CheB family. In terms of processing, phosphorylated by CheA. Phosphorylation of the N-terminal regulatory domain activates the methylesterase activity.

The protein resides in the cytoplasm. The enzyme catalyses [protein]-L-glutamate 5-O-methyl ester + H2O = L-glutamyl-[protein] + methanol + H(+). It catalyses the reaction L-glutaminyl-[protein] + H2O = L-glutamyl-[protein] + NH4(+). In terms of biological role, involved in chemotaxis. Part of a chemotaxis signal transduction system that modulates chemotaxis in response to various stimuli. Catalyzes the demethylation of specific methylglutamate residues introduced into the chemoreceptors (methyl-accepting chemotaxis proteins or MCP) by CheR. Also mediates the irreversible deamidation of specific glutamine residues to glutamic acid. The polypeptide is Protein-glutamate methylesterase/protein-glutamine glutaminase (Methylobacillus flagellatus (strain ATCC 51484 / DSM 6875 / VKM B-1610 / KT)).